The following is a 186-amino-acid chain: Imidazoleglycerol-phosphate dehydratase (186 aa).

Belongs to the imidazoleglycerol-phosphate dehydratase family.

The protein resides in the cytoplasm. The enzyme catalyses D-erythro-1-(imidazol-4-yl)glycerol 3-phosphate = 3-(imidazol-4-yl)-2-oxopropyl phosphate + H2O. It functions in the pathway amino-acid biosynthesis; L-histidine biosynthesis; L-histidine from 5-phospho-alpha-D-ribose 1-diphosphate: step 6/9. In Dictyoglomus thermophilum (strain ATCC 35947 / DSM 3960 / H-6-12), this protein is Imidazoleglycerol-phosphate dehydratase.